The following is a 159-amino-acid chain: Pathogenesis-related leaf protein 6 (159 aa).

The N-terminal stretch at 1–24 is a signal peptide; it reads MGLFNISLLLTCLMVLAIFHSCEA. Glutamine 25 carries the pyrrolidone carboxylic acid modification. Residues 32–147 enclose the SCP domain; the sequence is LAVHNDARAQ…NGWWFISCNY (116 aa). 3 disulfide bridges follow: cysteine 68–cysteine 136, cysteine 109–cysteine 115, and cysteine 131–cysteine 145.

This sequence belongs to the CRISP family.

Its function is as follows. Probably involved in the defense reaction of plants against pathogens. Has antifungal activity. In Solanum lycopersicum (Tomato), this protein is Pathogenesis-related leaf protein 6 (PR1B1).